A 321-amino-acid polypeptide reads, in one-letter code: Lipoyl synthase (321 aa).

[4Fe-4S] cluster-binding residues include C68, C73, C79, C94, C98, C101, and S308. The Radical SAM core domain maps to 80-297 (FNHGTATFMI…KVLADELGFT (218 aa)).

The protein belongs to the radical SAM superfamily. Lipoyl synthase family. The cofactor is [4Fe-4S] cluster.

The protein localises to the cytoplasm. It catalyses the reaction [[Fe-S] cluster scaffold protein carrying a second [4Fe-4S](2+) cluster] + N(6)-octanoyl-L-lysyl-[protein] + 2 oxidized [2Fe-2S]-[ferredoxin] + 2 S-adenosyl-L-methionine + 4 H(+) = [[Fe-S] cluster scaffold protein] + N(6)-[(R)-dihydrolipoyl]-L-lysyl-[protein] + 4 Fe(3+) + 2 hydrogen sulfide + 2 5'-deoxyadenosine + 2 L-methionine + 2 reduced [2Fe-2S]-[ferredoxin]. Its pathway is protein modification; protein lipoylation via endogenous pathway; protein N(6)-(lipoyl)lysine from octanoyl-[acyl-carrier-protein]: step 2/2. Its function is as follows. Catalyzes the radical-mediated insertion of two sulfur atoms into the C-6 and C-8 positions of the octanoyl moiety bound to the lipoyl domains of lipoate-dependent enzymes, thereby converting the octanoylated domains into lipoylated derivatives. The polypeptide is Lipoyl synthase (Shewanella sp. (strain MR-7)).